Here is a 484-residue protein sequence, read N- to C-terminus: Glutamate--tRNA ligase (484 aa).

The 'HIGH' region motif lies at 11–21 (PSPTGLLHIGN). The 'KMSKS' region signature appears at 255–259 (KLSKR). Position 258 (Lys-258) interacts with ATP.

It belongs to the class-I aminoacyl-tRNA synthetase family. Glutamate--tRNA ligase type 1 subfamily. As to quaternary structure, monomer.

The protein resides in the cytoplasm. It catalyses the reaction tRNA(Glu) + L-glutamate + ATP = L-glutamyl-tRNA(Glu) + AMP + diphosphate. Functionally, catalyzes the attachment of glutamate to tRNA(Glu) in a two-step reaction: glutamate is first activated by ATP to form Glu-AMP and then transferred to the acceptor end of tRNA(Glu). The polypeptide is Glutamate--tRNA ligase (Streptococcus thermophilus (strain CNRZ 1066)).